Consider the following 401-residue polypeptide: Imidazolonepropionase (401 aa).

Residues histidine 66 and histidine 68 each contribute to the Fe(3+) site. 2 residues coordinate Zn(2+): histidine 66 and histidine 68. Residues arginine 75, tyrosine 138, and histidine 171 each coordinate 4-imidazolone-5-propanoate. Residue tyrosine 138 participates in N-formimidoyl-L-glutamate binding. Residue histidine 236 participates in Fe(3+) binding. Histidine 236 serves as a coordination point for Zn(2+). Residue glutamine 239 participates in 4-imidazolone-5-propanoate binding. Aspartate 311 serves as a coordination point for Fe(3+). Aspartate 311 is a binding site for Zn(2+). The N-formimidoyl-L-glutamate site is built by asparagine 313 and glycine 315. Threonine 316 contacts 4-imidazolone-5-propanoate.

It belongs to the metallo-dependent hydrolases superfamily. HutI family. Requires Zn(2+) as cofactor. The cofactor is Fe(3+).

It localises to the cytoplasm. It catalyses the reaction 4-imidazolone-5-propanoate + H2O = N-formimidoyl-L-glutamate. It functions in the pathway amino-acid degradation; L-histidine degradation into L-glutamate; N-formimidoyl-L-glutamate from L-histidine: step 3/3. In terms of biological role, catalyzes the hydrolytic cleavage of the carbon-nitrogen bond in imidazolone-5-propanoate to yield N-formimidoyl-L-glutamate. It is the third step in the universal histidine degradation pathway. The protein is Imidazolonepropionase of Pseudomonas savastanoi pv. phaseolicola (strain 1448A / Race 6) (Pseudomonas syringae pv. phaseolicola (strain 1448A / Race 6)).